We begin with the raw amino-acid sequence, 737 residues long: SANT and BTB domain regulator of class switch recombination (737 aa).

An SANT domain is found at 21–59 (DMILYPLIGIPQTINWETVARLVPGLTPKECVKRFDELK). The 109-residue stretch at 147–255 (MVIHVCDEAK…QCIQYCHKNM (109 aa)) folds into the BTB domain. A compositionally biased stretch (acidic residues) spans 555–576 (SEEEEYTTGSEVTEDEVGDEEE). The interval 555 to 618 (SEEEEYTTGS…TLEKSTSRDV (64 aa)) is disordered. The segment covering 580-595 (KQRKKEKPKKFTKPPK) has biased composition (basic residues). A compositionally biased stretch (basic and acidic residues) spans 604-615 (QKKEKTLEKSTS).

Belongs to the KIAA1841 family. Homodimer. Interacts (via the BTB domain) with HDAC1 and NCOR2.

Functionally, negatively regulates class switch recombination or isotype switching in splenic B-cells. This chain is SANT and BTB domain regulator of class switch recombination, found in Rattus norvegicus (Rat).